We begin with the raw amino-acid sequence, 707 residues long: MAP kinase-interacting serine/threonine-protein kinase mnk-1 (707 aa).

The span at 1–24 shows a compositional bias: polar residues; sequence MFFLDNTDSMTSSSRGITMPNTIS. Disordered stretches follow at residues 1–29 and 101–131; these read MFFL…HEDV and RQRE…YVGR. Positions 203–493 constitute a Protein kinase domain; that stretch reads KLTDEHLGSG…ADQILSHRWL (291 aa). ATP is bound by residues 209–217 and K232; that span reads LGSGAYGSV. The Proton acceptor role is filled by D325. Disordered regions lie at residues 589 to 628 and 688 to 707; these read RSGE…SADD and FEDE…QVNV.

It belongs to the protein kinase superfamily. CAMK Ser/Thr protein kinase family. Mg(2+) is required as a cofactor. As to expression, expressed in pharynx, intestine, vulva and body wall muscles.

The protein localises to the nucleus. Its subcellular location is the cytoplasm. It catalyses the reaction L-seryl-[protein] + ATP = O-phospho-L-seryl-[protein] + ADP + H(+). The catalysed reaction is L-threonyl-[protein] + ATP = O-phospho-L-threonyl-[protein] + ADP + H(+). Serine/threonine-protein kinase which is required in the germline to positively regulate lifespan. May play a role in body wall muscle contraction. May be involved in embryonic cytokinesis. The polypeptide is MAP kinase-interacting serine/threonine-protein kinase mnk-1 (Caenorhabditis elegans).